Here is a 525-residue protein sequence, read N- to C-terminus: Glutamate--cysteine ligase (525 aa).

Belongs to the glutamate--cysteine ligase type 1 family. Type 1 subfamily.

It catalyses the reaction L-cysteine + L-glutamate + ATP = gamma-L-glutamyl-L-cysteine + ADP + phosphate + H(+). The protein operates within sulfur metabolism; glutathione biosynthesis; glutathione from L-cysteine and L-glutamate: step 1/2. This is Glutamate--cysteine ligase from Pseudomonas putida (strain W619).